Here is a 293-residue protein sequence, read N- to C-terminus: Pseudouridine-5'-phosphate glycosidase (293 aa).

The active-site Proton donor is the Glu-21. Residues Lys-81 and Val-101 each coordinate substrate. Asp-130 provides a ligand contact to Mn(2+). 132-134 (SQD) is a binding site for substrate. The active-site Nucleophile is the Lys-151.

It belongs to the pseudouridine-5'-phosphate glycosidase family. As to quaternary structure, homotrimer. It depends on Mn(2+) as a cofactor.

The catalysed reaction is D-ribose 5-phosphate + uracil = psi-UMP + H2O. In terms of biological role, catalyzes the reversible cleavage of pseudouridine 5'-phosphate (PsiMP) to ribose 5-phosphate and uracil. Functions biologically in the cleavage direction, as part of a pseudouridine degradation pathway. The polypeptide is Pseudouridine-5'-phosphate glycosidase (Thermosipho africanus (strain TCF52B)).